A 527-amino-acid chain; its full sequence is Inosine-5'-monophosphate dehydrogenase (527 aa).

2 consecutive CBS domains span residues 121–183 and 184–240; these read FILD…VTAV and MSTD…PLAS. NAD(+) contacts are provided by residues 277 to 279 and 327 to 329; these read DSS and GMG. Residues Gly-329 and Gly-331 each contribute to the K(+) site. Ser-332 contributes to the IMP binding site. K(+) is bound at residue Cys-334. Cys-334 serves as the catalytic Thioimidate intermediate. IMP is bound by residues 367–369 and 390–391; these read DGG and GS. Arg-440 serves as the catalytic Proton acceptor. Position 452 (Gln-452) interacts with IMP. Positions 506–527 are disordered; the sequence is ASAQTEGNVHGLHSHEKKLYSS. K(+)-binding residues include Glu-511 and Gly-512. Residues 518–527 show a composition bias toward basic and acidic residues; it reads HSHEKKLYSS.

Belongs to the IMPDH/GMPR family. Homotetramer. K(+) serves as cofactor.

It localises to the cytoplasm. The catalysed reaction is IMP + NAD(+) + H2O = XMP + NADH + H(+). The protein operates within purine metabolism; XMP biosynthesis via de novo pathway; XMP from IMP: step 1/1. Its activity is regulated as follows. Mycophenolic acid (MPA) is a non-competitive inhibitor that prevents formation of the closed enzyme conformation by binding to the same site as the amobile flap. In contrast, mizoribine monophosphate (MZP) is a competitive inhibitor that induces the closed conformation. MPA is a potent inhibitor of mammalian IMPDHs but a poor inhibitor of the bacterial enzymes. MZP is a more potent inhibitor of bacterial IMPDH. Functionally, catalyzes the conversion of inosine 5'-phosphate (IMP) to xanthosine 5'-phosphate (XMP), the first committed and rate-limiting step in the de novo synthesis of guanine nucleotides, and therefore plays an important role in the regulation of cell growth. Part of the gene cluster that mediates the biosynthesis of mycophenolic acid (MPA), the first isolated antibiotic natural product in the world. Does not play a role in the biosynthesis of MPA, but is involved in self resistance to MPA, since MPA acts as an inhibitor of IMP dehydrogenases. The protein is Inosine-5'-monophosphate dehydrogenase of Penicillium brevicompactum.